The following is a 237-amino-acid chain: Mitochondrial carrier-like protein L276 (237 aa).

Solcar repeat units follow at residues 1-83 (MAKY…FENK), 85-161 (YPYT…LNEY), and 164-233 (KPVV…LNKK). A run of 5 helical transmembrane segments spans residues 11–27 (AIATIVAEIITLPICTF), 60–76 (VPAIMSQTYSTSSKYFL), 91–108 (MINGIISGIMTSLITHPI), 140–160 (SFGKTVISSSMFFPLYETLNE), and 166–183 (VVSSMLTAIISTTIMQPL). The Substrate recognition motif lies at 191-196 (IYGLSL). A helical membrane pass occupies residues 205 to 226 (YYRGLSLNLMRIVPHFVITMTT).

This sequence belongs to the mitochondrial carrier (TC 2.A.29) family.

Its subcellular location is the host mitochondrion inner membrane. Transports dATP and to a lesser extent dTTP, TTP, UTP and ADP, possibly across the mitochondrial inner membrane. This Acanthamoeba polyphaga (Amoeba) protein is Mitochondrial carrier-like protein L276.